Consider the following 253-residue polypeptide: Ipsdienol dehydrogenase (253 aa).

NAD(+) contacts are provided by residues 12 to 40 (VTGG…FSRN) and Asp63. Ser149 lines the substrate pocket. Residue Tyr162 is the Proton acceptor of the active site. Residue Lys166 coordinates NAD(+).

Belongs to the short-chain dehydrogenases/reductases (SDR) family. In terms of tissue distribution, specifically expressed in male midguts. Expressed at higher level in the anterior midgut of fed males.

Its subcellular location is the cytoplasm. The protein localises to the cytosol. The catalysed reaction is (4R)-ipsdienol + NADP(+) = ipsdienone + NADPH + H(+). The enzyme catalyses (4R)-ipsdienol + NAD(+) = ipsdienone + NADH + H(+). Its function is as follows. Catalyzes the oxidation of racemic ipsdienol and (4R)-(-)-ipsdienol to form ipsdienone (2-methyl-6-methylene-2,7-octadien-4-one), an intermediate in the biosynthesis of pheromonal ipsdienol in male pine engraver beetles. In contrast, (4S)-(+)-ipsdienol is not a substrate. The protein is Ipsdienol dehydrogenase of Ips pini (Pine engraver beetle).